The primary structure comprises 563 residues: Methylcrotonoyl-CoA carboxylase beta chain, mitochondrial (563 aa).

The N-terminal 22 residues, 1–22 (MWGALRSVLRPCSRASVPRQRA), are a transit peptide targeting the mitochondrion. A CoA carboxyltransferase N-terminal domain is found at 49 to 306 (MKALVNQLHE…QKKLDVTVEP (258 aa)). The tract at residues 49-555 (MKALVNQLHE…SAALNAPIQR (507 aa)) is carboxyltransferase. Lysine 70 is modified (N6-acetyllysine; alternate). An N6-succinyllysine; alternate modification is found at lysine 70. Lysine 141 carries the N6-succinyllysine modification. A CoA carboxyltransferase C-terminal domain is found at 309 to 555 (EPLFPADELY…SAALNAPIQR (247 aa)). An acyl-CoA binding region spans residues 343–372 (RFNEFKALYGDTLVTGFARIFGYPVGIIGN). The residue at position 433 (lysine 433) is an N6-succinyllysine. Lysine 495 bears the N6-acetyllysine; alternate mark. An N6-succinyllysine; alternate modification is found at lysine 495. Residue lysine 511 is modified to N6-acetyllysine.

The protein belongs to the AccD/PCCB family. Probably a dodecamer composed of six biotin-containing alpha subunits (MCCC1) and six beta (MCCC2) subunits.

It localises to the mitochondrion matrix. It carries out the reaction 3-methylbut-2-enoyl-CoA + hydrogencarbonate + ATP = 3-methyl-(2E)-glutaconyl-CoA + ADP + phosphate + H(+). It participates in amino-acid degradation; L-leucine degradation; (S)-3-hydroxy-3-methylglutaryl-CoA from 3-isovaleryl-CoA: step 2/3. Carboxyltransferase subunit of the 3-methylcrotonyl-CoA carboxylase, an enzyme that catalyzes the conversion of 3-methylcrotonyl-CoA to 3-methylglutaconyl-CoA, a critical step for leucine and isovaleric acid catabolism. In Rattus norvegicus (Rat), this protein is Methylcrotonoyl-CoA carboxylase beta chain, mitochondrial (Mccc2).